Here is a 222-residue protein sequence, read N- to C-terminus: Small ribosomal subunit protein uS3 (222 aa).

The region spanning 39–108 (IRRHIKEKLY…TISLDIKEIK (70 aa)) is the KH type-2 domain.

It belongs to the universal ribosomal protein uS3 family. As to quaternary structure, part of the 30S ribosomal subunit. Forms a tight complex with proteins S10 and S14.

Binds the lower part of the 30S subunit head. Binds mRNA in the 70S ribosome, positioning it for translation. This chain is Small ribosomal subunit protein uS3, found in Caldicellulosiruptor bescii (strain ATCC BAA-1888 / DSM 6725 / KCTC 15123 / Z-1320) (Anaerocellum thermophilum).